Here is a 403-residue protein sequence, read N- to C-terminus: Coiled-coil domain-containing glutamate-rich protein 1 (403 aa).

A compositionally biased stretch (basic and acidic residues) spans 1–11 (MTQTVNEREDP). Disordered stretches follow at residues 1-23 (MTQT…ASSI), 51-70 (IEYE…GSWF), 134-164 (RPPG…PPID), 202-241 (QQEK…VEED), and 261-350 (PALM…GEQR). Basic residues predominate over residues 137 to 157 (GRKKRWGRRGRGLRRHPRRSF). The span at 209–220 (QQAALRAQQAQE) shows a compositional bias: low complexity. Positions 261 to 271 (PALMQHNQSPT) are enriched in polar residues. Residues 275–346 (VEEEEKNVDD…YMLEETGLEE (72 aa)) show a composition bias toward acidic residues. Residues 292 to 353 (CDEKEESEEE…LEEGEQRAEE (62 aa)) are a coiled coil.

In terms of tissue distribution, expressed in testis.

The protein resides in the nucleus. In terms of biological role, regulator of histone epigenetic modifications and chromatin compaction into the sperm head, required for histone-to-protamine (HTP) transition. HTP is a key event in which somatic histones are first replaced by testis-specific histone variants, then transition proteins (TNPs) are incorporated into the spermatid nucleus, and finally protamines (PRMs) replace the TNPs to promote chromatin condensation. The protein is Coiled-coil domain-containing glutamate-rich protein 1 (Ccer1) of Mus musculus (Mouse).